The chain runs to 407 residues: Tyrosine--tRNA ligase (407 aa).

Tyrosine 35 lines the L-tyrosine pocket. Residues 40-49 (PTADSLHVGH) carry the 'HIGH' region motif. Residues tyrosine 168 and glutamine 172 each contribute to the L-tyrosine site. The 'KMSKS' region signature appears at 228–232 (KMGKT). Lysine 231 contributes to the ATP binding site. In terms of domain architecture, S4 RNA-binding spans 341-405 (NLLVDLLVKC…RGKKNFNRIV (65 aa)).

It belongs to the class-I aminoacyl-tRNA synthetase family. TyrS type 1 subfamily. Homodimer.

Its subcellular location is the cytoplasm. It carries out the reaction tRNA(Tyr) + L-tyrosine + ATP = L-tyrosyl-tRNA(Tyr) + AMP + diphosphate + H(+). In terms of biological role, catalyzes the attachment of tyrosine to tRNA(Tyr) in a two-step reaction: tyrosine is first activated by ATP to form Tyr-AMP and then transferred to the acceptor end of tRNA(Tyr). The protein is Tyrosine--tRNA ligase of Clostridium botulinum (strain ATCC 19397 / Type A).